A 211-amino-acid polypeptide reads, in one-letter code: Protein-methionine-sulfoxide reductase heme-binding subunit MsrQ (211 aa).

The next 4 helical transmembrane spans lie at 17 to 37 (LAGL…GLGA), 82 to 102 (LWCF…ELGV), 116 to 136 (PYLT…FTST), and 153 to 173 (FVYL…KIIS).

The protein belongs to the MsrQ family. In terms of assembly, heterodimer of a catalytic subunit (MsrP) and a heme-binding subunit (MsrQ). FMN is required as a cofactor. Requires heme b as cofactor.

It is found in the cell inner membrane. In terms of biological role, part of the MsrPQ system that repairs oxidized periplasmic proteins containing methionine sulfoxide residues (Met-O), using respiratory chain electrons. Thus protects these proteins from oxidative-stress damage caused by reactive species of oxygen and chlorine generated by the host defense mechanisms. MsrPQ is essential for the maintenance of envelope integrity under bleach stress, rescuing a wide series of structurally unrelated periplasmic proteins from methionine oxidation, including the primary periplasmic chaperone SurA and the lipoprotein Pal. MsrQ provides electrons for reduction to the reductase catalytic subunit MsrP, using the quinone pool of the respiratory chain. This is Protein-methionine-sulfoxide reductase heme-binding subunit MsrQ from Shigella sonnei (strain Ss046).